The following is a 276-amino-acid chain: ADP-dependent (S)-NAD(P)H-hydrate dehydratase (276 aa).

The YjeF C-terminal domain occupies 7–275 (TEEHVRATLP…DILPRVWKRF (269 aa)). (6S)-NADPHX contacts are provided by Ala42, Gly104, and His149. Residues 186-190 (KGNQT) and Gly215 each bind AMP. Asp216 serves as a coordination point for (6S)-NADPHX.

It belongs to the NnrD/CARKD family. Homotetramer. Mg(2+) serves as cofactor.

The enzyme catalyses (6S)-NADHX + ADP = AMP + phosphate + NADH + H(+). The catalysed reaction is (6S)-NADPHX + ADP = AMP + phosphate + NADPH + H(+). Catalyzes the dehydration of the S-form of NAD(P)HX at the expense of ADP, which is converted to AMP. Together with NAD(P)HX epimerase, which catalyzes the epimerization of the S- and R-forms, the enzyme allows the repair of both epimers of NAD(P)HX, a damaged form of NAD(P)H that is a result of enzymatic or heat-dependent hydration. The sequence is that of ADP-dependent (S)-NAD(P)H-hydrate dehydratase from Bacillus subtilis (strain 168).